The primary structure comprises 417 residues: Calreticulin (417 aa).

The signal sequence occupies residues 1 to 17 (MLLSVPLLLGLLGLAAA). The segment at 18–197 (EPAVYFKEQF…NSQVESGSLE (180 aa)) is N-domain. Glutamine 26 is a Ca(2+) binding site. At lysine 48 the chain carries N6-acetyllysine. The Ca(2+) site is built by lysine 62 and lysine 64. Position 64 is an N6-(2-hydroxyisobutyryl)lysine (lysine 64). Cysteine 105 and cysteine 137 are disulfide-bonded. 4 residues coordinate an alpha-D-glucoside: tyrosine 109, lysine 111, tyrosine 128, and aspartate 135. At lysine 159 the chain carries N6-acetyllysine. The 1-1 repeat unit spans residues 191–202 (VESGSLEDDWDF). Positions 191-255 (VESGSLEDDW…DAKKPEDWDE (65 aa)) are 4 X approximate repeats. Residues 193 to 277 (SGSLEDDWDF…NPEYKGEWKP (85 aa)) form a disordered region. The interval 198–308 (DDWDFLPPKK…YSPDANIYAY (111 aa)) is P-domain. Positions 207–251 (KIKDPDAAKPEDWDERAKIDDPTDSKPEDWDKPEHIPDPDAKKPE) are enriched in basic and acidic residues. The residue at position 209 (lysine 209) is an N6-acetyllysine. 6 tandem repeats follow at residues 210–221 (DPDAAKPEDWDE), 227–238 (DPTDSKPEDWDK), 244–255 (DPDAKKPEDWDE), 259–269 (GEWEPPVIQNP), 273–283 (GEWKPRQIDNP), and 287–297 (GTWIHPEIDNP). Positions 237–270 (DKPEHIPDPDAKKPEDWDEEMDGEWEPPVIQNPE) are interaction with PPIB. Over residues 252 to 261 (DWDEEMDGEW) the composition is skewed to acidic residues. The 3 X approximate repeats stretch occupies residues 259 to 297 (GEWEPPVIQNPEYKGEWKPRQIDNPDYKGTWIHPEIDNP). The segment at 309–417 (DSFAVLGLDL…TTPGQTKDEL (109 aa)) is C-domain. Residue aspartate 317 participates in an alpha-D-glucoside binding. Aspartate 328 is a binding site for Ca(2+). Residues 350–417 (TKASEKQMKD…TTPGQTKDEL (68 aa)) form a disordered region. Over residues 352–379 (ASEKQMKDKQDEEQRLKEEEEDKKRKEE) the composition is skewed to basic and acidic residues. Positions 380-408 (EEAEDKEDEDDRDEDEEDEDEKEEDEEDT) are enriched in acidic residues. The short motif at 414–417 (KDEL) is the Prevents secretion from ER element.

Belongs to the calreticulin family. As to quaternary structure, monomer. Component of an EIF2 complex at least composed of CELF1/CUGBP1, CALR, CALR3, EIF2S1, EIF2S2, HSP90B1 and HSPA5. Interacts with PDIA3/ERp57 and SPACA9. Interacts with TRIM21. Interacts with NR3C1. Interacts with PPIB. Interacts (via P-domain) with PDIA5. Interacts with GABARAP. Interacts with CLCC1.

The protein localises to the endoplasmic reticulum lumen. It is found in the cytoplasm. The protein resides in the cytosol. Its subcellular location is the cytolytic granule. It localises to the secreted. The protein localises to the extracellular space. It is found in the extracellular matrix. The protein resides in the cell surface. Its subcellular location is the sarcoplasmic reticulum lumen. It localises to the cytoplasmic vesicle. The protein localises to the secretory vesicle. It is found in the cortical granule. Its function is as follows. Calcium-binding chaperone that promotes folding, oligomeric assembly and quality control in the endoplasmic reticulum (ER) via the calreticulin/calnexin cycle. This lectin interacts transiently with almost all of the monoglucosylated glycoproteins that are synthesized in the ER. Interacts with the DNA-binding domain of NR3C1 and mediates its nuclear export. Involved in maternal gene expression regulation. May participate in oocyte maturation via the regulation of calcium homeostasis. Present in the cortical granules of non-activated oocytes, is exocytosed during the cortical reaction in response to oocyte activation and might participate in the block to polyspermy. This Cricetulus griseus (Chinese hamster) protein is Calreticulin (CALR).